Here is a 339-residue protein sequence, read N- to C-terminus: MSSAALVPADDILEPTLQSILDQKSLRWIFVGGKGGVGKTTTSCSLAIQLAKVRKSVLLISTDPAHNLSDAFGQKFGKEARLVDGFDNLSAMEIDPSASMQDLLAAGGEQGEDMGFGLGGMMQDLAFSIPGVDEAMSFAEVLKQVKSLSYEVIVFDTAPTGHTLRFLQFPTVLEKGLAKLSQLSNQFGPMLNSVLGARGGLPGGQNLDEVLSKMESLRETISEVNAQFKDADLTTFVCVCIAEFLSLYETERMIQELTSYQIDTHAIVVNQLLFPGKDSTCEQCKARRKMQKKYLDEIAELYEDFNVVRMPLLVEEVRGKEKLERFSDMLVHPYQPPQE.

ATP is bound at residue 34–41; that stretch reads KGGVGKTT. The active site involves Asp63. 2 residues coordinate ATP: Glu243 and Asn270. 2 residues coordinate Zn(2+): Cys281 and Cys284.

This sequence belongs to the arsA ATPase family. Homodimer.

The protein localises to the cytoplasm. It is found in the endoplasmic reticulum. Its function is as follows. ATPase required for the post-translational delivery of tail-anchored (TA) proteins to the endoplasmic reticulum. Recognizes and selectively binds the transmembrane domain of TA proteins in the cytosol. This complex then targets to the endoplasmic reticulum by membrane-bound receptors, where the tail-anchored protein is released for insertion. This process is regulated by ATP binding and hydrolysis. ATP binding drives the homodimer towards the closed dimer state, facilitating recognition of newly synthesized TA membrane proteins. ATP hydrolysis is required for insertion. Subsequently, the homodimer reverts towards the open dimer state, lowering its affinity for the membrane-bound receptor, and returning it to the cytosol to initiate a new round of targeting. The sequence is that of ATPase GET3 from Coccidioides immitis (strain RS) (Valley fever fungus).